A 169-amino-acid chain; its full sequence is Nucleoside-triphosphatase THEP1 (169 aa).

Residues 11–18 (GEPGVGKT) and 100–107 (IIGIDEIG) contribute to the ATP site.

It belongs to the THEP1 NTPase family.

The enzyme catalyses a ribonucleoside 5'-triphosphate + H2O = a ribonucleoside 5'-diphosphate + phosphate + H(+). Has nucleotide phosphatase activity towards ATP, GTP, CTP, TTP and UTP. May hydrolyze nucleoside diphosphates with lower efficiency. The sequence is that of Nucleoside-triphosphatase THEP1 from Sulfurisphaera tokodaii (strain DSM 16993 / JCM 10545 / NBRC 100140 / 7) (Sulfolobus tokodaii).